The following is a 192-amino-acid chain: Peptidyl-tRNA hydrolase (192 aa).

Tyr17 is a tRNA binding site. His22 serves as the catalytic Proton acceptor. TRNA contacts are provided by Phe68, Asn70, and Asn116.

Belongs to the PTH family. Monomer.

Its subcellular location is the cytoplasm. The catalysed reaction is an N-acyl-L-alpha-aminoacyl-tRNA + H2O = an N-acyl-L-amino acid + a tRNA + H(+). Hydrolyzes ribosome-free peptidyl-tRNAs (with 1 or more amino acids incorporated), which drop off the ribosome during protein synthesis, or as a result of ribosome stalling. Functionally, catalyzes the release of premature peptidyl moieties from peptidyl-tRNA molecules trapped in stalled 50S ribosomal subunits, and thus maintains levels of free tRNAs and 50S ribosomes. This Xylella fastidiosa (strain Temecula1 / ATCC 700964) protein is Peptidyl-tRNA hydrolase.